The chain runs to 61 residues: Large ribosomal subunit protein uL30 (61 aa).

Belongs to the universal ribosomal protein uL30 family. Part of the 50S ribosomal subunit.

In Chlorobium phaeobacteroides (strain DSM 266 / SMG 266 / 2430), this protein is Large ribosomal subunit protein uL30.